Here is a 129-residue protein sequence, read N- to C-terminus: uncharacterized protein (129 aa).

The signal sequence occupies residues 1–24 (MAFGWHSMHGSIIWFLQIAQLSTA). Transmembrane regions (helical) follow at residues 38–58 (ISNLFFLVSTGALWFELCAIF) and 95–115 (IAHIEAHTSIVGFMISLFTPL).

Its subcellular location is the membrane. This is an uncharacterized protein from Saccharomyces cerevisiae (strain ATCC 204508 / S288c) (Baker's yeast).